The sequence spans 151 residues: 6,7-dimethyl-8-ribityllumazine synthase (151 aa).

5-amino-6-(D-ribitylamino)uracil is bound by residues F15, 49 to 51 (AVE), and 73 to 75 (AVI). 78–79 (ET) provides a ligand contact to (2S)-2-hydroxy-3-oxobutyl phosphate. The active-site Proton donor is the H81. F106 is a 5-amino-6-(D-ribitylamino)uracil binding site. R120 contacts (2S)-2-hydroxy-3-oxobutyl phosphate.

This sequence belongs to the DMRL synthase family. Forms an icosahedral capsid composed of 60 subunits, arranged as a dodecamer of pentamers.

It carries out the reaction (2S)-2-hydroxy-3-oxobutyl phosphate + 5-amino-6-(D-ribitylamino)uracil = 6,7-dimethyl-8-(1-D-ribityl)lumazine + phosphate + 2 H2O + H(+). It functions in the pathway cofactor biosynthesis; riboflavin biosynthesis; riboflavin from 2-hydroxy-3-oxobutyl phosphate and 5-amino-6-(D-ribitylamino)uracil: step 1/2. Its function is as follows. Catalyzes the formation of 6,7-dimethyl-8-ribityllumazine by condensation of 5-amino-6-(D-ribitylamino)uracil with 3,4-dihydroxy-2-butanone 4-phosphate. This is the penultimate step in the biosynthesis of riboflavin. The chain is 6,7-dimethyl-8-ribityllumazine synthase from Coxiella burnetii (strain Dugway 5J108-111).